The following is a 1218-amino-acid chain: Coatomer subunit alpha-2 (1218 aa).

WD repeat units lie at residues 7 to 48 (TKSN…DRFD), 49 to 88 (EHEG…CLFT), 91 to 132 (GHLD…SVLT), 133 to 172 (GHNH…KKSA), 202 to 241 (GHDR…AWEV), 246 to 285 (GHMN…GIQT), 288 to 326 (REHD…PAFA), and 363 to 404 (SLNQ…VGRS). Residues 826–849 (NRGAVDEEEEDVEGDWGEGLDKFD) are disordered. A compositionally biased stretch (acidic residues) spans 831 to 843 (DEEEEDVEGDWGE).

As to quaternary structure, oligomeric complex that consists of at least the alpha, beta, beta', gamma, delta, epsilon and zeta subunits.

It localises to the cytoplasm. The protein localises to the golgi apparatus membrane. Its subcellular location is the cytoplasmic vesicle. The protein resides in the COPI-coated vesicle membrane. Its function is as follows. The coatomer is a cytosolic protein complex that binds to dilysine motifs and reversibly associates with Golgi non-clathrin-coated vesicles, which further mediate biosynthetic protein transport from the ER, via the Golgi up to the trans Golgi network. Coatomer complex is required for budding from Golgi membranes, and is essential for the retrograde Golgi-to-ER transport of dilysine-tagged proteins. This Arabidopsis thaliana (Mouse-ear cress) protein is Coatomer subunit alpha-2.